A 588-amino-acid chain; its full sequence is Interferon-activable protein 208 (588 aa).

A Pyrin domain is found at 5–92 (MVNYYKQIVL…VDILRKEMEK (88 aa)). Disordered stretches follow at residues 157 to 183 (ATST…SLQT) and 469 to 526 (EMQN…RRVN). Polar residues-rich tracts occupy residues 172–183 (RFPTTASSSLQT) and 470–487 (MQNP…QPRL).

It belongs to the HIN-200 family.

In Mus musculus (Mouse), this protein is Interferon-activable protein 208.